Here is a 130-residue protein sequence, read N- to C-terminus: Small ribosomal subunit protein uS9 (130 aa).

This sequence belongs to the universal ribosomal protein uS9 family.

The polypeptide is Small ribosomal subunit protein uS9 (Xanthomonas campestris pv. campestris (strain 8004)).